We begin with the raw amino-acid sequence, 348 residues long: VIP36-like protein (348 aa).

Positions 1–38 (MAVALGPSGWWQRWRRRLSAREVSRMLLLLLLLGSGQG) are cleaved as a signal peptide. The Lumenal portion of the chain corresponds to 39-313 (PRQVGAGQTF…APLPPLSGLA (275 aa)). Residues 49–274 (EYLKREHSLS…DVISLKLFEL (226 aa)) enclose the L-type lectin-like domain. A carbohydrate-binding residues include Ser93 and Asp128. 3 residues coordinate Ca(2+): Asp159, Tyr161, and Asn163. A carbohydrate contacts are provided by Tyr161 and Asn163. Asn181 is a glycosylation site (N-linked (GlcNAc...) asparagine). A carbohydrate is bound at residue His188. Asp191 contacts Ca(2+). The cysteines at positions 200 and 237 are disulfide-linked. 258–260 (GDL) contributes to the a carbohydrate binding site. A helical transmembrane segment spans residues 314 to 334 (LFLIVFFSLVFSVFAIVIGII). At 335–348 (LYNKWQDQSRKRFY) the chain is on the cytoplasmic side. The short motif at 344–346 (RKR) is the Endoplasmic reticulum retention signal element.

Its subcellular location is the endoplasmic reticulum membrane. It localises to the golgi apparatus membrane. Its function is as follows. May be involved in the regulation of export from the endoplasmic reticulum of a subset of glycoproteins. May function as a regulator of ERGIC-53. This chain is VIP36-like protein (LMAN2L), found in Bos taurus (Bovine).